A 967-amino-acid polypeptide reads, in one-letter code: Isoleucine--tRNA ligase (967 aa).

The short motif at 68–78 (PYANGTLHMGH) is the 'HIGH' region element. Residue glutamate 583 participates in L-isoleucyl-5'-AMP binding. The 'KMSKS' region signature appears at 624-628 (KMSKS). ATP is bound at residue lysine 627. Zn(2+) contacts are provided by cysteine 937, cysteine 940, cysteine 957, and cysteine 960.

It belongs to the class-I aminoacyl-tRNA synthetase family. IleS type 1 subfamily. In terms of assembly, monomer. Zn(2+) serves as cofactor.

The protein localises to the cytoplasm. It catalyses the reaction tRNA(Ile) + L-isoleucine + ATP = L-isoleucyl-tRNA(Ile) + AMP + diphosphate. In terms of biological role, catalyzes the attachment of isoleucine to tRNA(Ile). As IleRS can inadvertently accommodate and process structurally similar amino acids such as valine, to avoid such errors it has two additional distinct tRNA(Ile)-dependent editing activities. One activity is designated as 'pretransfer' editing and involves the hydrolysis of activated Val-AMP. The other activity is designated 'posttransfer' editing and involves deacylation of mischarged Val-tRNA(Ile). In Prochlorococcus marinus (strain NATL1A), this protein is Isoleucine--tRNA ligase.